The following is a 176-amino-acid chain: NAD(P)H-quinone oxidoreductase subunit J (176 aa).

It belongs to the complex I 30 kDa subunit family. As to quaternary structure, NDH-1 can be composed of about 15 different subunits; different subcomplexes with different compositions have been identified which probably have different functions.

It is found in the cellular thylakoid membrane. It carries out the reaction a plastoquinone + NADH + (n+1) H(+)(in) = a plastoquinol + NAD(+) + n H(+)(out). The enzyme catalyses a plastoquinone + NADPH + (n+1) H(+)(in) = a plastoquinol + NADP(+) + n H(+)(out). NDH-1 shuttles electrons from an unknown electron donor, via FMN and iron-sulfur (Fe-S) centers, to quinones in the respiratory and/or the photosynthetic chain. The immediate electron acceptor for the enzyme in this species is believed to be plastoquinone. Couples the redox reaction to proton translocation, and thus conserves the redox energy in a proton gradient. Cyanobacterial NDH-1 also plays a role in inorganic carbon-concentration. This Nostoc punctiforme (strain ATCC 29133 / PCC 73102) protein is NAD(P)H-quinone oxidoreductase subunit J.